A 309-amino-acid chain; its full sequence is Protoheme IX farnesyltransferase (309 aa).

Helical transmembrane passes span 35–55, 64–84, 114–134, 135–155, 161–181, 187–207, 236–256, 257–277, and 289–309; these read IGIVNSNLITTFTGLWLALYF, LHIVFFTLFGSALVIAGSCSI, VLWLGIIFITVGTLSLLMTTV, TAAIVGLIGAITYIFLYTMWS, LNTVVGSISGAVPPVIGWTAV, VVPLVLFLIMFIWQTPHFLAL, IVVWVACLLPLPFYLFSLGVP, FLTVATLLNVGWLALGLYGFK, and FIYSLNYLTILFVAMVIATLW.

Belongs to the UbiA prenyltransferase family. Protoheme IX farnesyltransferase subfamily. In terms of assembly, interacts with CtaA.

The protein resides in the cell membrane. It carries out the reaction heme b + (2E,6E)-farnesyl diphosphate + H2O = Fe(II)-heme o + diphosphate. Its pathway is porphyrin-containing compound metabolism; heme O biosynthesis; heme O from protoheme: step 1/1. Functionally, converts heme B (protoheme IX) to heme O by substitution of the vinyl group on carbon 2 of heme B porphyrin ring with a hydroxyethyl farnesyl side group. In Geobacillus sp. (strain WCH70), this protein is Protoheme IX farnesyltransferase.